A 117-amino-acid polypeptide reads, in one-letter code: MIIKKISNLVRKKRHLKLRKKIIGTNQKPRLNIFRSNKSFYIQLIDDEKRITLCSVHSKEVDSKGLNITTATKVGELIAQKALAQGIVNVVFDRGGFLYHGKIEALADASRRLGLKF.

Belongs to the universal ribosomal protein uL18 family. In terms of assembly, part of the 50S ribosomal subunit; part of the 5S rRNA/L5/L18/L25 subcomplex. Contacts the 5S and 23S rRNAs.

In terms of biological role, this is one of the proteins that bind and probably mediate the attachment of the 5S RNA into the large ribosomal subunit, where it forms part of the central protuberance. This chain is Large ribosomal subunit protein uL18, found in Phytoplasma mali (strain AT).